Consider the following 779-residue polypeptide: Pre-mRNA-splicing factor cef-1 (779 aa).

HTH myb-type domains are found at residues 1 to 56 and 57 to 106; these read MPVV…DPSI and KKIE…DEAE. 2 consecutive DNA-binding regions (H-T-H motif) follow at residues 29 to 52 and 80 to 102; these read WARV…NEWL and WRTI…QRLL. Disordered stretches follow at residues 113 to 192, 246 to 284, 424 to 448, and 497 to 525; these read LGLT…ESRR, EYQR…PSVQ, TPLR…LRTP, and WELE…DRRE. The segment covering 127–152 has biased composition (basic and acidic residues); it reads SADDVRKLRPGEVDPDPETKPARPDT. Residues 157 to 204 are a coiled coil; the sequence is EDEKEMLSEARARLANTQGKKAKRKARERQQEESRRLAALQKRRELKT. 2 stretches are compositionally biased toward basic and acidic residues: residues 246–256 and 263–281; these read EYQRAHFDPKK and RKGE…DKDP. The stretch at 653–772 forms a coiled coil; that stretch reads DEEEEQISTM…EELDALTLNG (120 aa).

This sequence belongs to the CEF1 family. Associated with the spliceosome.

Its subcellular location is the cytoplasm. The protein resides in the nucleus. Involved in pre-mRNA splicing and cell cycle control. The chain is Pre-mRNA-splicing factor cef-1 (cef-1) from Neurospora crassa (strain ATCC 24698 / 74-OR23-1A / CBS 708.71 / DSM 1257 / FGSC 987).